We begin with the raw amino-acid sequence, 133 residues long: Fluoride-specific ion channel FluC (133 aa).

A run of 4 helical transmembrane segments spans residues 12-32 (LAMTGGALGSGLRFAIGASLI), 41-61 (WGTLTVNLLGSFVAGVLLVWL), 76-96 (IVGVIGGLTTFSSLMMECLVF), and 104-124 (MIGIYLAVTLLAGLALVFAGA). The Na(+) site is built by G81 and T84.

It belongs to the fluoride channel Fluc/FEX (TC 1.A.43) family.

Its subcellular location is the cell inner membrane. It catalyses the reaction fluoride(in) = fluoride(out). Its activity is regulated as follows. Na(+) is not transported, but it plays an essential structural role and its presence is essential for fluoride channel function. Functionally, fluoride-specific ion channel. Important for reducing fluoride concentration in the cell, thus reducing its toxicity. This Xanthomonas axonopodis pv. citri (strain 306) protein is Fluoride-specific ion channel FluC.